The primary structure comprises 51 residues: Large ribosomal subunit protein eL39 (51 aa).

The interval 1–23 (MSALKKSFIKRKLAKKQKQNRPM) is disordered. A compositionally biased stretch (basic residues) spans 7 to 19 (SFIKRKLAKKQKQ).

This sequence belongs to the eukaryotic ribosomal protein eL39 family. As to quaternary structure, interacts with impact.

This Caenorhabditis elegans protein is Large ribosomal subunit protein eL39 (rpl-39).